Here is a 75-residue protein sequence, read N- to C-terminus: ELLEEGEDCYCHIPPNPCCDPATCKLTPGSQCAEGLCCDQCRFKKKGTICRIARGDFPDDRCTGLSDDCPRWNDL.

The Disintegrin domain occupies 1-75; it reads ELLEEGEDCY…SDDCPRWNDL (75 aa). Intrachain disulfides connect cysteine 9-cysteine 24, cysteine 11-cysteine 19, cysteine 18-cysteine 41, cysteine 32-cysteine 38, cysteine 37-cysteine 62, and cysteine 50-cysteine 69. The Cell attachment site signature appears at 54–56; it reads RGD.

The protein belongs to the venom metalloproteinase (M12B) family. P-II subfamily. P-IIa sub-subfamily. As to quaternary structure, monomer (disintegrin). In terms of tissue distribution, expressed by the venom gland.

The protein localises to the secreted. Functionally, inhibits fibrinogen interaction with platelet receptors, and inhibits aggregation induced by ADP, thrombin, collagen and platelet-activating factor. Acts by binding to the alpha-IIb/beta-3 (ITGA2B/ITGB3) on the platelet surface. The polypeptide is Disintegrin CTF-II (Protobothrops flavoviridis (Habu)).